Consider the following 101-residue polypeptide: Small ribosomal subunit protein uS14 (101 aa).

It belongs to the universal ribosomal protein uS14 family. As to quaternary structure, part of the 30S ribosomal subunit. Contacts proteins S3 and S10.

Binds 16S rRNA, required for the assembly of 30S particles and may also be responsible for determining the conformation of the 16S rRNA at the A site. The chain is Small ribosomal subunit protein uS14 from Dinoroseobacter shibae (strain DSM 16493 / NCIMB 14021 / DFL 12).